The following is a 382-amino-acid chain: Chaperone protein DnaJ 1 (382 aa).

Residues 4 to 68 (DYYGILGVDR…DKRRIVDMGG (65 aa)) form the J domain. Residues 134–216 (GAKKDLTLDT…CAGDGRVRAR (83 aa)) form a CR-type zinc finger. Zn(2+)-binding residues include cysteine 147, cysteine 150, cysteine 164, cysteine 167, cysteine 190, cysteine 193, cysteine 204, and cysteine 207. CXXCXGXG motif repeat units lie at residues 147 to 154 (CTKCHGSG), 164 to 171 (CGTCNGAG), 190 to 197 (CHTCDGTG), and 204 to 211 (CTECAGDG).

The protein belongs to the DnaJ family. Homodimer. It depends on Zn(2+) as a cofactor.

It is found in the cytoplasm. Its function is as follows. Participates actively in the response to hyperosmotic and heat shock by preventing the aggregation of stress-denatured proteins and by disaggregating proteins, also in an autonomous, DnaK-independent fashion. Unfolded proteins bind initially to DnaJ; upon interaction with the DnaJ-bound protein, DnaK hydrolyzes its bound ATP, resulting in the formation of a stable complex. GrpE releases ADP from DnaK; ATP binding to DnaK triggers the release of the substrate protein, thus completing the reaction cycle. Several rounds of ATP-dependent interactions between DnaJ, DnaK and GrpE are required for fully efficient folding. Also involved, together with DnaK and GrpE, in the DNA replication of plasmids through activation of initiation proteins. This chain is Chaperone protein DnaJ 1, found in Corynebacterium glutamicum (strain ATCC 13032 / DSM 20300 / JCM 1318 / BCRC 11384 / CCUG 27702 / LMG 3730 / NBRC 12168 / NCIMB 10025 / NRRL B-2784 / 534).